A 211-amino-acid chain; its full sequence is High mobility group protein B1-like 1 (211 aa).

K3, K7, K8, K12, K28, K29, and K30 each carry N6-acetyllysine. Positions 9 to 79 (PRGKMSSYAF…HYERQMKTYI (71 aa)) form a DNA-binding region, HMG box 1. A disordered region spans residues 71-96 (YERQMKTYIPPKGETKKKFKDPNAPK). Basic and acidic residues predominate over residues 83-94 (GETKKKFKDPNA). The segment at residues 95–163 (PKRPPSAFFL…KYEKDIAAYQ (69 aa)) is a DNA-binding region (HMG box 2). K127, K128, K172, K173, K177, K180, K182, K183, K184, and K185 each carry N6-acetyllysine. The segment at 161–211 (AYQAKGKPEAAKKGVVKAEKSKKKKEEEEDEEDEEDEEEEDEEDEEDDDDE) is disordered. Over residues 166 to 179 (GKPEAAKKGVVKAE) the composition is skewed to basic and acidic residues. The segment covering 187–211 (EEEDEEDEEDEEEEDEEDEEDDDDE) has biased composition (acidic residues).

This sequence belongs to the HMGB family.

The protein resides in the nucleus. It is found in the chromosome. Binds preferentially single-stranded DNA and unwinds double-stranded DNA. The sequence is that of High mobility group protein B1-like 1 (HMGB1P1) from Homo sapiens (Human).